A 492-amino-acid polypeptide reads, in one-letter code: Ketol-acid reductoisomerase (NADP(+)) (492 aa).

The region spanning 14-208 (LDQLGKCRFM…GGHRAGVLQS (195 aa)) is the KARI N-terminal Rossmann domain. NADP(+) is bound by residues 45-48 (CGAQ), R68, R76, S78, and 108-110 (DKQ). The active site involves H132. Residue G158 coordinates NADP(+). KARI C-terminal knotted domains lie at 209–344 (SFVA…NAPQ) and 345–485 (FDGK…MKDM). The Mg(2+) site is built by D217, E221, E389, and E393. Position 414 (S414) interacts with substrate.

It belongs to the ketol-acid reductoisomerase family. Mg(2+) serves as cofactor.

The catalysed reaction is (2R)-2,3-dihydroxy-3-methylbutanoate + NADP(+) = (2S)-2-acetolactate + NADPH + H(+). It catalyses the reaction (2R,3R)-2,3-dihydroxy-3-methylpentanoate + NADP(+) = (S)-2-ethyl-2-hydroxy-3-oxobutanoate + NADPH + H(+). The protein operates within amino-acid biosynthesis; L-isoleucine biosynthesis; L-isoleucine from 2-oxobutanoate: step 2/4. Its pathway is amino-acid biosynthesis; L-valine biosynthesis; L-valine from pyruvate: step 2/4. Functionally, involved in the biosynthesis of branched-chain amino acids (BCAA). Catalyzes an alkyl-migration followed by a ketol-acid reduction of (S)-2-acetolactate (S2AL) to yield (R)-2,3-dihydroxy-isovalerate. In the isomerase reaction, S2AL is rearranged via a Mg-dependent methyl migration to produce 3-hydroxy-3-methyl-2-ketobutyrate (HMKB). In the reductase reaction, this 2-ketoacid undergoes a metal-dependent reduction by NADPH to yield (R)-2,3-dihydroxy-isovalerate. The sequence is that of Ketol-acid reductoisomerase (NADP(+)) from Pectobacterium carotovorum subsp. carotovorum (strain PC1).